A 478-amino-acid polypeptide reads, in one-letter code: Lysosome membrane protein 2 (478 aa).

Residues 1 to 4 (MGRC) lie on the Cytoplasmic side of the membrane. A helical membrane pass occupies residues 5–27 (CFYTAGTLSLLLLVTSVTLLVAR). The Lumenal portion of the chain corresponds to 28–433 (VFQKAVDQTI…QLKSVINTTL (406 aa)). N-linked (GlcNAc...) asparagine glycosylation is found at asparagine 45, asparagine 68, asparagine 105, and asparagine 122. The important for interaction with GBA1 stretch occupies residues 155–191 (LIEAMLKAYQQKLFVIHTVHELLWGYKDEILSLVHIF). N-linked (GlcNAc...) asparagine glycans are attached at residues asparagine 206, asparagine 224, asparagine 249, and asparagine 304. 2 disulfide bridges follow: cysteine 274/cysteine 329 and cysteine 312/cysteine 318. 3 N-linked (GlcNAc...) asparagine glycosylation sites follow: asparagine 325, asparagine 412, and asparagine 430. A helical membrane pass occupies residues 434–459 (VVTNIPYIIMALGVFFGLVFTWLACR). The Cytoplasmic segment spans residues 460 to 478 (GQGSMDEGTADERAPLIRT).

This sequence belongs to the CD36 family. As to quaternary structure, interacts with GBA1. Acylated by palmitic acid group(s). Post-translationally, heavily glycosylated. As to expression, detected in the extracts of brain, heart, lung, liver and kidney.

Its subcellular location is the lysosome membrane. Its function is as follows. Acts as a lysosomal receptor for glucosylceramidase (GBA1) targeting. In Mus musculus (Mouse), this protein is Lysosome membrane protein 2 (Scarb2).